Here is a 250-residue protein sequence, read N- to C-terminus: Isoprenyl transferase (250 aa).

Asp27 is a catalytic residue. Asp27 serves as a coordination point for Mg(2+). Residues 28 to 31, Trp32, His48, and 76 to 78 each bind substrate; these read GNRR and STE. The Proton acceptor role is filled by Asn79. Residues Phe80, Arg82, Arg199, and 205-207 each bind substrate; that span reads RVS. Glu218 is a binding site for Mg(2+).

The protein belongs to the UPP synthase family. In terms of assembly, homodimer. Mg(2+) serves as cofactor.

Catalyzes the condensation of isopentenyl diphosphate (IPP) with allylic pyrophosphates generating different type of terpenoids. The polypeptide is Isoprenyl transferase (Chlamydia abortus (strain DSM 27085 / S26/3) (Chlamydophila abortus)).